Consider the following 315-residue polypeptide: Tyrosine recombinase XerC (315 aa).

The region spanning 13–104 (ADLAAAREEW…GVRSLLRHLE (92 aa)) is the Core-binding (CB) domain. The region spanning 125-309 (SLPKPLTADD…DTQRLLEVYD (185 aa)) is the Tyr recombinase domain. Residues arginine 168, lysine 193, histidine 261, arginine 264, and histidine 287 contribute to the active site. Catalysis depends on tyrosine 296, which acts as the O-(3'-phospho-DNA)-tyrosine intermediate.

The protein belongs to the 'phage' integrase family. XerC subfamily. In terms of assembly, forms a cyclic heterotetrameric complex composed of two molecules of XerC and two molecules of XerD.

The protein localises to the cytoplasm. In terms of biological role, site-specific tyrosine recombinase, which acts by catalyzing the cutting and rejoining of the recombining DNA molecules. The XerC-XerD complex is essential to convert dimers of the bacterial chromosome into monomers to permit their segregation at cell division. It also contributes to the segregational stability of plasmids. The chain is Tyrosine recombinase XerC from Brucella melitensis biotype 1 (strain ATCC 23456 / CCUG 17765 / NCTC 10094 / 16M).